The sequence spans 201 residues: Recombination protein RecR (201 aa).

The C4-type zinc-finger motif lies at 57-72; the sequence is CKYCRTFTEQEQCTIC. One can recognise a Toprim domain in the interval 81 to 176; the sequence is GQICVVESPA…TASRIAHGVP (96 aa).

The protein belongs to the RecR family.

In terms of biological role, may play a role in DNA repair. It seems to be involved in an RecBC-independent recombinational process of DNA repair. It may act with RecF and RecO. The protein is Recombination protein RecR of Photorhabdus laumondii subsp. laumondii (strain DSM 15139 / CIP 105565 / TT01) (Photorhabdus luminescens subsp. laumondii).